The primary structure comprises 1016 residues: C2 domain-containing protein 5 (1016 aa).

Residues 1 to 109 (MPGKLKVKIV…EAATVISGWF (109 aa)) form the C2 domain. Residues aspartate 19, aspartate 26, aspartate 76, aspartate 78, serine 81, and aspartate 84 each contribute to the Ca(2+) site. Phosphoserine; by PKB/AKT2 is present on serine 197. A phosphoserine mark is found at serine 200 and serine 260. The interval 265–330 (LKEIPFNEDP…SGSAGKEGGP (66 aa)) is disordered. The span at 274–289 (PNPNTHSSGPSTPLKN) shows a compositional bias: polar residues. A compositionally biased stretch (low complexity) spans 290–318 (QTYSFSPSKSYSRQSSSSDTDLSLTPKTG). Serine 293, serine 295, serine 304, serine 305, and serine 306 each carry phosphoserine. Threonine 317 carries the post-translational modification Phosphothreonine. Over residues 319–328 (MGSGSAGKEG) the composition is skewed to gly residues. Phosphoserine is present on serine 323. Threonine 601 is modified (phosphothreonine). The segment at 636 to 668 (VSEEMIGSPIPEPRQRSRLLRSQSESSDEVTEL) is disordered. 5 positions are modified to phosphoserine: serine 643, serine 657, serine 659, serine 661, and serine 662. Position 666 is a phosphothreonine (threonine 666). Residues serine 671, serine 817, and serine 869 each carry the phosphoserine modification.

It depends on Ca(2+) as a cofactor. Phosphorylated on Ser-197 by active myristoylated kinase AKT2; insulin-stimulated phosphorylation by AKT2 regulates SLC2A4/GLUT4 translocation into the plasma membrane. As to expression, expressed in liver, muscle and fat.

The protein resides in the cytoplasmic vesicle membrane. The protein localises to the cytoplasm. It localises to the cell cortex. It is found in the cell membrane. Its subcellular location is the cell projection. The protein resides in the ruffle. Required for insulin-stimulated glucose transport and glucose transporter SLC2A4/GLUT4 translocation from intracellular glucose storage vesicle (GSV) to the plasma membrane (PM) in adipocytes. Binds phospholipid membranes in a calcium-dependent manner and is necessary for the optimal membrane fusion between SLC2A4/GLUT4 GSV and the PM. This Mus musculus (Mouse) protein is C2 domain-containing protein 5 (C2cd5).